A 126-amino-acid polypeptide reads, in one-letter code: FCS-Like Zinc finger 17 (126 aa).

An FLZ-type zinc finger spans residues 41–85 (CFLKTCHLCNKQLHQDKDVYMYRGDLGFCSRECRESQMLIDDRKE).

This sequence belongs to the FLZ family. In terms of assembly, interacts with KIN10 and KIN11 via its FLZ-type zinc finger domain. Forms heterodimer with FLZ2 in vitro.

The protein resides in the nucleus. The protein localises to the cytoplasm. May act as an adapter to facilitate the interaction of SnRK1 complex with effector proteins, conferring tissue- and stimulus-type specific differences in the SnRK1 regulation pathway. The chain is FCS-Like Zinc finger 17 from Arabidopsis thaliana (Mouse-ear cress).